A 548-amino-acid polypeptide reads, in one-letter code: T-complex protein 1 subunit theta (548 aa).

Residues alanine 528–alanine 548 form a disordered region.

Belongs to the TCP-1 chaperonin family. Heterooligomeric complex.

It localises to the cytoplasm. Molecular chaperone; assists the folding of proteins upon ATP hydrolysis. Known to play a role, in vitro, in the folding of actin and tubulin. Required for correct subcellular localization of pgl-1. This is T-complex protein 1 subunit theta from Caenorhabditis briggsae.